A 1717-amino-acid polypeptide reads, in one-letter code: DNA-directed RNA polymerase I subunit RPA1 (1717 aa).

The Zn(2+) site is built by Cys-64, Cys-67, Cys-74, His-77, Cys-104, and Cys-107. The interval 110 to 201 (LTCPRAAIYL…VAQFWKTHMA (92 aa)) is clamp. 2 residues coordinate Zn(2+): Cys-205 and Cys-208. The interval 327-433 (FTNGQTVNLQ…IRQILEKKEG (107 aa)) is clamp. Residues 410–423 (DSEMDKLMLEKYPG) are rudder. DNA-binding residues include Lys-431, Arg-436, and Arg-443. An involved in RRN3 binding to Pol I complex region spans residues 475–549 (YPQPVTPWNV…QGTKVVCRHV (75 aa)). An RNA-binding site is contributed by Arg-559. Positions 595, 597, and 599 each coordinate Mg(2+). Asp-599 provides a ligand contact to RNA. Residues 812 to 890 (KPNADVVRQR…NEINKACMPL (79 aa)) form a funnel region. The interval 967–1008 (RPPEFFFHCMAGREGLVDTAVKTSRSGYLQRCIIKHLEGLVI) is bridging helix. The segment at 1067–1162 (ADPQKVLGHI…SLSVWRPDIY (96 aa)) is mediates the interaction with TOP2A. Residues 1214–1255 (PGEAVGLLAAQSIGEPSTQMTLNTFHFAGRGEMNVTLGIPRL) are trigger loop. Arg-1256 contacts DNA. The interval 1372 to 1493 (RNVNSRRATQ…RRHSRPQGAE (122 aa)) is disordered. The span at 1380-1397 (TQKDLNDTEDSGRSQREE) shows a compositional bias: basic and acidic residues. Position 1393 is a phosphoserine (Ser-1393). Composition is skewed to acidic residues over residues 1398–1419 (ERDEEEEGNIVDAEAEEGDADA) and 1429–1450 (EEEVDYESEEEGEEEEEEEVQE). Over residues 1452-1464 (GNIKGDGVHQGHE) the composition is skewed to basic and acidic residues. Residues 1465–1477 (PDEEEHLGLEEEE) are compositionally biased toward acidic residues.

Belongs to the RNA polymerase beta' chain family. As to quaternary structure, component of the RNA polymerase I (Pol I) complex consisting of 13 subunits: a ten-subunit catalytic core composed of POLR1A/RPA1, POLR1B/RPA2, POLR1C/RPAC1, POLR1D/RPAC2, POLR1H/RPA12, POLR2E/RPABC1, POLR2F/RPABC2, POLR2H/RPABC3, POLR2K/RPABC4 and POLR2L/RPABC5; a mobile stalk subunit POLR1F/RPA43 protruding from the core and additional subunits homologous to general transcription factors POLR1E/RPA49 and POLR1G/RPA34. Part of Pol I pre-initiation complex (PIC), in which Pol I core assembles with RRN3 and promoter-bound UTBF and SL1/TIF-IB complex. Interacts (via dock II domain) with TOP2A; this interaction may assist Pol I transcription initiation by releasing supercoils occurring during DNA unwinding. Interacts with CAVIN1; this interaction induces the dissociation of Pol I complex paused at rDNA terminator sequences. Interacts with MYO1C. Interacts with ERBB2. Interacts with DDX11. Interacts with RECQL5. Mg(2+) serves as cofactor. Post-translationally, phosphorylated.

It is found in the nucleus. It localises to the nucleolus. The protein resides in the chromosome. It carries out the reaction RNA(n) + a ribonucleoside 5'-triphosphate = RNA(n+1) + diphosphate. Functionally, catalytic core component of RNA polymerase I (Pol I), a DNA-dependent RNA polymerase which synthesizes ribosomal RNA precursors using the four ribonucleoside triphosphates as substrates. Transcribes 47S pre-rRNAs from multicopy rRNA gene clusters, giving rise to 5.8S, 18S and 28S ribosomal RNAs. Pol I-mediated transcription cycle proceeds through transcription initiation, transcription elongation and transcription termination stages. During transcription initiation, Pol I pre-initiation complex (PIC) is recruited by the selectivity factor 1 (SL1/TIF-IB) complex bound to the core promoter that precedes an rDNA repeat unit. The PIC assembly bends the promoter favoring the formation of the transcription bubble and promoter escape. Once the polymerase has escaped from the promoter it enters the elongation phase during which RNA is actively polymerized, based on complementarity with the template DNA strand. Highly processive, assembles in structures referred to as 'Miller trees' where many elongating Pol I complexes queue and transcribe the same rDNA coding regions. At terminator sequences downstream of the rDNA gene, PTRF interacts with Pol I and halts Pol I transcription leading to the release of the RNA transcript and polymerase from the DNA. Forms Pol I active center together with the second largest subunit POLR1B/RPA2. Appends one nucleotide at a time to the 3' end of the nascent RNA, with POLR1A/RPA1 contributing a Mg(2+)-coordinating DxDGD motif, and POLR1B/RPA2 participating in the coordination of a second Mg(2+) ion and providing lysine residues believed to facilitate Watson-Crick base pairing between the incoming nucleotide and the template base. Typically, Mg(2+) ions direct a 5' nucleoside triphosphate to form a phosphodiester bond with the 3' hydroxyl of the preceding nucleotide of the nascent RNA, with the elimination of pyrophosphate. Has proofreading activity: Pauses and backtracks to allow the cleavage of a missincorporated nucleotide via POLR1H/RPA12. High Pol I processivity is associated with decreased transcription fidelity. The sequence is that of DNA-directed RNA polymerase I subunit RPA1 from Mus musculus (Mouse).